We begin with the raw amino-acid sequence, 180 residues long: Putative peroxiredoxin YkuU (180 aa).

In terms of domain architecture, Thioredoxin spans 4 to 165 (RMVGKQAPRF…TLRVLQALQT (162 aa)). C52 (cysteine sulfenic acid (-SOH) intermediate) is an active-site residue.

Belongs to the peroxiredoxin family. AhpC/Prx1 subfamily. In terms of assembly, homodimer; disulfide-linked, upon oxidation.

Its subcellular location is the cytoplasm. The catalysed reaction is a hydroperoxide + [protein]-dithiol = [protein]-disulfide + an alcohol + H2O. Its function is as follows. Thiol-specific peroxidase that catalyzes the reduction of hydrogen peroxide and organic hydroperoxides to water and alcohols, respectively. Plays a role in cell protection against oxidative stress by detoxifying peroxides. The protein is Putative peroxiredoxin YkuU (ykuU) of Bacillus subtilis (strain 168).